Reading from the N-terminus, the 195-residue chain is dCTP deaminase (195 aa).

Residues 110-115 (RSSLAR), D128, 136-138 (VLE), Y171, K178, and Q182 each bind dCTP. Catalysis depends on E138, which acts as the Proton donor/acceptor.

The protein belongs to the dCTP deaminase family. Homotrimer.

It catalyses the reaction dCTP + H2O + H(+) = dUTP + NH4(+). Its pathway is pyrimidine metabolism; dUMP biosynthesis; dUMP from dCTP (dUTP route): step 1/2. In terms of biological role, catalyzes the deamination of dCTP to dUTP. This is dCTP deaminase from Idiomarina loihiensis (strain ATCC BAA-735 / DSM 15497 / L2-TR).